The chain runs to 313 residues: Ornithine carbamoyltransferase (313 aa).

Residues Ser57–Thr60, Gln84, Arg108, and His135–Gln138 each bind carbamoyl phosphate. L-ornithine is bound by residues Asn166, Asp230, and Ser234–Met235. Carbamoyl phosphate contacts are provided by residues Cys270–Leu271 and Arg298.

The protein belongs to the aspartate/ornithine carbamoyltransferase superfamily. OTCase family. In terms of assembly, homohexamer.

The protein localises to the cytoplasm. The enzyme catalyses carbamoyl phosphate + L-ornithine = L-citrulline + phosphate + H(+). The protein operates within amino-acid biosynthesis; L-arginine biosynthesis; L-arginine from L-ornithine and carbamoyl phosphate: step 1/3. Functionally, reversibly catalyzes the transfer of the carbamoyl group from carbamoyl phosphate (CP) to the N(epsilon) atom of ornithine (ORN) to produce L-citrulline. This Gloeobacter violaceus (strain ATCC 29082 / PCC 7421) protein is Ornithine carbamoyltransferase.